The primary structure comprises 504 residues: Maturase K (504 aa).

It belongs to the intron maturase 2 family. MatK subfamily.

It is found in the plastid. It localises to the chloroplast. Functionally, usually encoded in the trnK tRNA gene intron. Probably assists in splicing its own and other chloroplast group II introns. The polypeptide is Maturase K (Cardamine amara (Large bitter-cress)).